Consider the following 67-residue polypeptide: UPF0434 protein Tcr_0959 (67 aa).

Belongs to the UPF0434 family.

In Hydrogenovibrio crunogenus (strain DSM 25203 / XCL-2) (Thiomicrospira crunogena), this protein is UPF0434 protein Tcr_0959.